A 341-amino-acid polypeptide reads, in one-letter code: Cytochrome c biogenesis protein CcsA (341 aa).

Helical transmembrane passes span 16-36 (LILL…GMSI), 37-57 (LPTL…TLLG), 68-88 (LSNL…VHLI), 97-117 (LVGV…ALSL), 142-162 (VMML…AFLI), 249-269 (IIGL…VWAN), 276-296 (WSWD…AAYL), and 310-330 (AILA…VNLL).

Belongs to the CcmF/CycK/Ccl1/NrfE/CcsA family. In terms of assembly, may interact with ccs1.

It is found in the cellular thylakoid membrane. Its function is as follows. Required during biogenesis of c-type cytochromes (cytochrome c6 and cytochrome f) at the step of heme attachment. This is Cytochrome c biogenesis protein CcsA from Rippkaea orientalis (strain PCC 8801 / RF-1) (Cyanothece sp. (strain PCC 8801)).